Consider the following 959-residue polypeptide: Leucine--tRNA ligase (959 aa).

Residues Pro-39–Ser-49 carry the 'HIGH' region motif. A 'KMSKS' region motif is present at residues Lys-637–Ser-641. Lys-640 contributes to the ATP binding site. The tract at residues Thr-933 to Gly-959 is disordered.

This sequence belongs to the class-I aminoacyl-tRNA synthetase family.

The protein resides in the cytoplasm. It catalyses the reaction tRNA(Leu) + L-leucine + ATP = L-leucyl-tRNA(Leu) + AMP + diphosphate. This chain is Leucine--tRNA ligase, found in Aeropyrum pernix (strain ATCC 700893 / DSM 11879 / JCM 9820 / NBRC 100138 / K1).